The sequence spans 236 residues: Translocon-associated protein subunit alpha (236 aa).

The first 20 residues, 1-20 (MNKLITLLLAVLMIISCVYS), serve as a signal peptide directing secretion. Residues 21-163 (DDVEITDDEV…TEKETSFDMD (143 aa)) lie on the Lumenal side of the membrane. Residues asparagine 74, asparagine 94, asparagine 141, asparagine 148, and asparagine 152 are each glycosylated (N-linked (GlcNAc...) asparagine). Residues 164–184 (SFFLILLGLGFVGGIGYIVYG) form a helical membrane-spanning segment. Residues 185 to 236 (KMPKQKKVRTVSKVNKNAVRVETEDETAEWLSGTSAASSKVKSVQKVVKKNK) are Cytoplasmic-facing.

It belongs to the TRAP-alpha family. In terms of assembly, heterotrimer of TRAP-alpha, TRAP-beta and TRAP-gamma. Phosphorylated in its cytoplasmic tail.

It is found in the endoplasmic reticulum membrane. In terms of biological role, TRAP proteins are part of a complex whose function is to bind calcium to the ER membrane and thereby regulate the retention of ER resident proteins. In Dictyostelium discoideum (Social amoeba), this protein is Translocon-associated protein subunit alpha (ssr1).